The chain runs to 358 residues: Tetraacyldisaccharide 4'-kinase (358 aa).

71-78 (IAGGAGKT) contacts ATP.

It belongs to the LpxK family.

The enzyme catalyses a lipid A disaccharide + ATP = a lipid IVA + ADP + H(+). It functions in the pathway glycolipid biosynthesis; lipid IV(A) biosynthesis; lipid IV(A) from (3R)-3-hydroxytetradecanoyl-[acyl-carrier-protein] and UDP-N-acetyl-alpha-D-glucosamine: step 6/6. Transfers the gamma-phosphate of ATP to the 4'-position of a tetraacyldisaccharide 1-phosphate intermediate (termed DS-1-P) to form tetraacyldisaccharide 1,4'-bis-phosphate (lipid IVA). The polypeptide is Tetraacyldisaccharide 4'-kinase (Methylibium petroleiphilum (strain ATCC BAA-1232 / LMG 22953 / PM1)).